The following is a 191-amino-acid chain: IMP cyclohydrolase (191 aa).

The protein belongs to the archaeal IMP cyclohydrolase family.

The enzyme catalyses IMP + H2O = 5-formamido-1-(5-phospho-D-ribosyl)imidazole-4-carboxamide. It functions in the pathway purine metabolism; IMP biosynthesis via de novo pathway; IMP from 5-formamido-1-(5-phospho-D-ribosyl)imidazole-4-carboxamide: step 1/1. Catalyzes the cyclization of 5-formylamidoimidazole-4-carboxamide ribonucleotide to IMP. The protein is IMP cyclohydrolase of Natronomonas pharaonis (strain ATCC 35678 / DSM 2160 / CIP 103997 / JCM 8858 / NBRC 14720 / NCIMB 2260 / Gabara) (Halobacterium pharaonis).